The following is a 132-amino-acid chain: Ribonuclease P protein component (132 aa).

The protein belongs to the RnpA family. In terms of assembly, consists of a catalytic RNA component (M1 or rnpB) and a protein subunit.

It catalyses the reaction Endonucleolytic cleavage of RNA, removing 5'-extranucleotides from tRNA precursor.. RNaseP catalyzes the removal of the 5'-leader sequence from pre-tRNA to produce the mature 5'-terminus. It can also cleave other RNA substrates such as 4.5S RNA. The protein component plays an auxiliary but essential role in vivo by binding to the 5'-leader sequence and broadening the substrate specificity of the ribozyme. The protein is Ribonuclease P protein component of Marinomonas sp. (strain MWYL1).